The chain runs to 316 residues: Porphobilinogen deaminase (316 aa).

Cysteine 245 carries the S-(dipyrrolylmethanemethyl)cysteine modification.

The protein belongs to the HMBS family. As to quaternary structure, monomer. Dipyrromethane is required as a cofactor.

The catalysed reaction is 4 porphobilinogen + H2O = hydroxymethylbilane + 4 NH4(+). Its pathway is porphyrin-containing compound metabolism; protoporphyrin-IX biosynthesis; coproporphyrinogen-III from 5-aminolevulinate: step 2/4. The protein operates within porphyrin-containing compound metabolism; chlorophyll biosynthesis. Its function is as follows. Tetrapolymerization of the monopyrrole PBG into the hydroxymethylbilane pre-uroporphyrinogen in several discrete steps. The sequence is that of Porphobilinogen deaminase from Prochlorococcus marinus (strain MIT 9515).